Reading from the N-terminus, the 252-residue chain is Acetoacetate decarboxylase (252 aa).

The active-site Schiff-base intermediate with acetoacetate is K116.

This sequence belongs to the ADC family.

It carries out the reaction acetoacetate + H(+) = acetone + CO2. In terms of biological role, catalyzes the conversion of acetoacetate to acetone and carbon dioxide. The sequence is that of Acetoacetate decarboxylase from Paraburkholderia phytofirmans (strain DSM 17436 / LMG 22146 / PsJN) (Burkholderia phytofirmans).